Here is a 701-residue protein sequence, read N- to C-terminus: DNA ligase (701 aa).

NAD(+) is bound by residues 43–47 (DAAYD), 92–93 (SL), and Glu-126. Catalysis depends on Lys-128, which acts as the N6-AMP-lysine intermediate. NAD(+)-binding residues include Arg-149, Glu-186, Lys-302, and Lys-326. Cys-420, Cys-423, Cys-444, and Cys-450 together coordinate Zn(2+). Residues 623–701 (ANDSPVAGKT…EDEWFDLIGA (79 aa)) enclose the BRCT domain.

Belongs to the NAD-dependent DNA ligase family. LigA subfamily. The cofactor is Mg(2+). Mn(2+) is required as a cofactor.

The enzyme catalyses NAD(+) + (deoxyribonucleotide)n-3'-hydroxyl + 5'-phospho-(deoxyribonucleotide)m = (deoxyribonucleotide)n+m + AMP + beta-nicotinamide D-nucleotide.. Its function is as follows. DNA ligase that catalyzes the formation of phosphodiester linkages between 5'-phosphoryl and 3'-hydroxyl groups in double-stranded DNA using NAD as a coenzyme and as the energy source for the reaction. It is essential for DNA replication and repair of damaged DNA. The sequence is that of DNA ligase from Maricaulis maris (strain MCS10) (Caulobacter maris).